Consider the following 251-residue polypeptide: Large ribosomal subunit protein uL3 (251 aa).

N5-methylglutamine is present on Q151. Residues 219–251 form a disordered region; the sequence is PGAFRRNGEEAAAAPAAEAPAETPAEEAGQEGA. Over residues 228–241 the composition is skewed to low complexity; sequence EAAAAPAAEAPAET. Positions 242-251 are enriched in acidic residues; that stretch reads PAEEAGQEGA.

The protein belongs to the universal ribosomal protein uL3 family. In terms of assembly, part of the 50S ribosomal subunit. Forms a cluster with proteins L14 and L19. In terms of processing, methylated by PrmB.

In terms of biological role, one of the primary rRNA binding proteins, it binds directly near the 3'-end of the 23S rRNA, where it nucleates assembly of the 50S subunit. This is Large ribosomal subunit protein uL3 from Parvibaculum lavamentivorans (strain DS-1 / DSM 13023 / NCIMB 13966).